Reading from the N-terminus, the 108-residue chain is Trp operon repressor homolog (108 aa).

The DNA-binding element occupies 59-82 (QRQISQLLGVGVATITRGSNELKS).

Belongs to the TrpR family. As to quaternary structure, homodimer.

Its subcellular location is the cytoplasm. This protein is an aporepressor. When complexed with L-tryptophan it binds the operator region of the trp operon and prevents the initiation of transcription. The chain is Trp operon repressor homolog from Aliivibrio fischeri (strain MJ11) (Vibrio fischeri).